The primary structure comprises 78 residues: UPF0335 protein A1E_00570 (78 aa).

This sequence belongs to the UPF0335 family.

The protein is UPF0335 protein A1E_00570 of Rickettsia canadensis (strain McKiel).